Consider the following 73-residue polypeptide: Small ribosomal subunit protein bS18c (73 aa).

This sequence belongs to the bacterial ribosomal protein bS18 family. In terms of assembly, part of the 30S ribosomal subunit.

It localises to the plastid. It is found in the chloroplast. The chain is Small ribosomal subunit protein bS18c (rps18) from Guillardia theta (Cryptophyte).